Consider the following 363-residue polypeptide: Chorismate synthase (363 aa).

Arg48 is an NADP(+) binding site. FMN is bound by residues 125 to 127 (RSS), 238 to 239 (NA), Gly278, 293 to 297 (KPTAS), and Arg319.

The protein belongs to the chorismate synthase family. Homotetramer. FMNH2 serves as cofactor.

The catalysed reaction is 5-O-(1-carboxyvinyl)-3-phosphoshikimate = chorismate + phosphate. Its pathway is metabolic intermediate biosynthesis; chorismate biosynthesis; chorismate from D-erythrose 4-phosphate and phosphoenolpyruvate: step 7/7. Functionally, catalyzes the anti-1,4-elimination of the C-3 phosphate and the C-6 proR hydrogen from 5-enolpyruvylshikimate-3-phosphate (EPSP) to yield chorismate, which is the branch point compound that serves as the starting substrate for the three terminal pathways of aromatic amino acid biosynthesis. This reaction introduces a second double bond into the aromatic ring system. This chain is Chorismate synthase, found in Acinetobacter baumannii (strain SDF).